The sequence spans 299 residues: Probable lipid kinase YegS (299 aa).

The DAGKc domain occupies 2–133 (ANFPDSLLIL…IDMARVNDKT (132 aa)). ATP contacts are provided by residues Thr-40, 66–72 (GDGTINE), and Thr-95. Residues Leu-215, Asp-218, and Leu-220 each coordinate Mg(2+). Catalysis depends on Glu-271, which acts as the Proton acceptor.

Belongs to the diacylglycerol/lipid kinase family. YegS lipid kinase subfamily. Mg(2+) is required as a cofactor. The cofactor is Ca(2+).

It is found in the cytoplasm. In terms of biological role, probably phosphorylates lipids; the in vivo substrate is unknown. The sequence is that of Probable lipid kinase YegS from Salmonella arizonae (strain ATCC BAA-731 / CDC346-86 / RSK2980).